A 354-amino-acid polypeptide reads, in one-letter code: Protein-arginine kinase (354 aa).

The Phosphagen kinase C-terminal domain maps to 24-254; the sequence is IVLSSRIRLA…QQIIQQEKMA (231 aa). ATP-binding positions include 27 to 31, His92, Arg125, 176 to 180, and 207 to 212; these read SSRIR, RASVM, and RGIYGE. The RDXXRA motif of the pArg binding pocket involved in allosteric regulation motif lies at 337–342; that stretch reads RDYRRA.

It belongs to the ATP:guanido phosphotransferase family.

It catalyses the reaction L-arginyl-[protein] + ATP = N(omega)-phospho-L-arginyl-[protein] + ADP + H(+). Appears to be allosterically activated by the binding of pArg-containing polypeptides to the pArg-binding pocket localized in the C-terminal domain of McsB. In terms of biological role, catalyzes the specific phosphorylation of arginine residues in a large number of proteins. Is part of the bacterial stress response system. Protein arginine phosphorylation has a physiologically important role and is involved in the regulation of many critical cellular processes, such as protein homeostasis, motility, competence, and stringent and stress responses, by regulating gene expression and protein activity. The protein is Protein-arginine kinase of Bacillus cereus (strain AH187).